The primary structure comprises 654 residues: Acetyl-coenzyme A synthetase (654 aa).

CoA contacts are provided by residues arginine 196–lysine 199 and threonine 316. ATP contacts are provided by residues glycine 392–proline 394, aspartate 416–threonine 421, aspartate 506, and arginine 521. Position 529 (serine 529) interacts with CoA. Arginine 532 contacts ATP. 2 residues coordinate Mg(2+): valine 543 and valine 548. At lysine 618 the chain carries N6-acetyllysine.

It belongs to the ATP-dependent AMP-binding enzyme family. Mg(2+) is required as a cofactor. In terms of processing, acetylated. Deacetylation by the SIR2-homolog deacetylase activates the enzyme.

It carries out the reaction acetate + ATP + CoA = acetyl-CoA + AMP + diphosphate. Its function is as follows. Catalyzes the conversion of acetate into acetyl-CoA (AcCoA), an essential intermediate at the junction of anabolic and catabolic pathways. AcsA undergoes a two-step reaction. In the first half reaction, AcsA combines acetate with ATP to form acetyl-adenylate (AcAMP) intermediate. In the second half reaction, it can then transfer the acetyl group from AcAMP to the sulfhydryl group of CoA, forming the product AcCoA. The sequence is that of Acetyl-coenzyme A synthetase from Methylobacillus flagellatus (strain ATCC 51484 / DSM 6875 / VKM B-1610 / KT).